A 238-amino-acid chain; its full sequence is Ribonuclease 3 (238 aa).

The RNase III domain maps to 4–130 (IQTLFQTLNI…LFGAIYLDLG (127 aa)). Residue E45 coordinates Mg(2+). Residue D49 is part of the active site. Mg(2+) is bound by residues D116 and E119. The active site involves E119. One can recognise a DRBM domain in the interval 154-222 (DFKTQLQEIV…AQQALSKVAK (69 aa)). A disordered region spans residues 215-238 (QALSKVAKPKDLLNNKGGKEKELQ). The span at 222-238 (KPKDLLNNKGGKEKELQ) shows a compositional bias: basic and acidic residues.

The protein belongs to the ribonuclease III family. As to quaternary structure, homodimer. Mg(2+) is required as a cofactor.

It is found in the cytoplasm. It carries out the reaction Endonucleolytic cleavage to 5'-phosphomonoester.. Functionally, digests double-stranded RNA. Involved in the processing of primary rRNA transcript to yield the immediate precursors to the large and small rRNAs (23S and 16S). Processes some mRNAs, and tRNAs when they are encoded in the rRNA operon. Processes pre-crRNA and tracrRNA of type II CRISPR loci if present in the organism. The polypeptide is Ribonuclease 3 (Onion yellows phytoplasma (strain OY-M)).